The chain runs to 185 residues: Signal peptidase I P (185 aa).

The Cytoplasmic segment spans residues 1-14 (MFDKEKRKKSNIID). The helical transmembrane segment at 15–34 (WIKAILIALILVFLVRTFLF) threads the bilayer. Residues 35–185 (EPYIVQGESM…FPLDRIRHAK (151 aa)) are Extracellular-facing. Active-site residues include Ser43 and Lys85.

The protein belongs to the peptidase S26 family.

It is found in the cell membrane. It catalyses the reaction Cleavage of hydrophobic, N-terminal signal or leader sequences from secreted and periplasmic proteins.. In Bacillus subtilis subsp. natto, this protein is Signal peptidase I P (sipP).